Consider the following 1005-residue polypeptide: DNA polymerase (1005 aa).

It belongs to the DNA polymerase type-B family. As to quaternary structure, interacts with OPG148. Component of the Uracil-DNA glycosylase(UDG)-OPG148-polymerase complex; OPG148 and OPG116/UDG form a heterodimeric processivity factor that associates with OPG071 to form the processive polymerase holoenzyme.

The catalysed reaction is DNA(n) + a 2'-deoxyribonucleoside 5'-triphosphate = DNA(n+1) + diphosphate. In terms of biological role, catalyzes DNA synthesis. Acquires processivity by associating with a heterodimeric processivity factor comprised of the viral OPG148 and OPG116 proteins, thereby forming the DNA polymerase holoenzyme. Displays 3'- to 5' exonuclease activity. Might participate in viral DNA recombination. Does not perform OPG116/D4synthesis across an abasic site. The chain is DNA polymerase (OPG071) from Variola virus.